The following is a 305-amino-acid chain: Serine/threonine-protein phosphatase PP-X homolog 3 (305 aa).

Positions 53, 55, 81, and 113 each coordinate Mn(2+). His-114 acts as the Proton donor in catalysis. Mn(2+) is bound by residues His-163 and His-237.

The protein belongs to the PPP phosphatase family. PP-4 (PP-X) subfamily. Mn(2+) is required as a cofactor.

The catalysed reaction is O-phospho-L-seryl-[protein] + H2O = L-seryl-[protein] + phosphate. It catalyses the reaction O-phospho-L-threonyl-[protein] + H2O = L-threonyl-[protein] + phosphate. The chain is Serine/threonine-protein phosphatase PP-X homolog 3 (Ppx3) from Paramecium tetraurelia.